The chain runs to 282 residues: Putative hydrolase Bcenmc03_4750 (282 aa).

Residues Glu124, Glu126, and Asp155 each coordinate Mg(2+).

This sequence belongs to the FAH family. Mg(2+) is required as a cofactor.

The protein is Putative hydrolase Bcenmc03_4750 of Burkholderia orbicola (strain MC0-3).